Reading from the N-terminus, the 202-residue chain is Peptidyl-tRNA hydrolase (202 aa).

Y19 is a binding site for tRNA. H24 functions as the Proton acceptor in the catalytic mechanism. TRNA is bound by residues Y70, N72, and N118.

This sequence belongs to the PTH family. In terms of assembly, monomer.

It localises to the cytoplasm. It carries out the reaction an N-acyl-L-alpha-aminoacyl-tRNA + H2O = an N-acyl-L-amino acid + a tRNA + H(+). Its function is as follows. Hydrolyzes ribosome-free peptidyl-tRNAs (with 1 or more amino acids incorporated), which drop off the ribosome during protein synthesis, or as a result of ribosome stalling. Catalyzes the release of premature peptidyl moieties from peptidyl-tRNA molecules trapped in stalled 50S ribosomal subunits, and thus maintains levels of free tRNAs and 50S ribosomes. The polypeptide is Peptidyl-tRNA hydrolase (Prochlorococcus marinus (strain NATL1A)).